The primary structure comprises 440 residues: Putative short-chain fatty acid transporter (440 aa).

The Periplasmic portion of the chain corresponds to 1 to 19; it reads MIGRISRFMTRFVSRWLPD. Residues 20 to 40 traverse the membrane as a helical segment; that stretch reads PLIFAMLLTLLTFVIALWLTP. The Cytoplasmic portion of the chain corresponds to 41–53; sequence QTPISMVKMWGDG. The helical transmembrane segment at 54–74 threads the bilayer; the sequence is FWNLLAFGMQMALIIVTGHAL. The Periplasmic segment spans residues 75–102; the sequence is ASSAPVKSLLRTAASAAKTPVQGVMLVT. Residues 103 to 123 form a helical membrane-spanning segment; that stretch reads FFGSVACVINWGFGLVVGAMF. At 124–137 the chain is on the cytoplasmic side; the sequence is AREVARRVPGSDYP. The next 2 helical transmembrane spans lie at 138–158 and 159–179; these read LLIA…SGSM and PLLA…IPVG. Residue Asp180 is a topological domain, cytoplasmic. The helical transmembrane segment at 181 to 201 threads the bilayer; the sequence is TLFSGFNIFITVALIVVMPFI. The Periplasmic segment spans residues 202-244; it reads TRMMMPKPSDVVSIDPKLLMEEADFQKQLPKDAPPSERLEESR. Transmembrane regions (helical) follow at residues 245-265 and 266-286; these read ILTL…FSEH and GFNI…LLLH. At 287–313 the chain is on the periplasmic side; it reads KTPMAYMRAISAAARSTAGILVQFPFY. Residues 314–334 traverse the membrane as a helical segment; the sequence is AGIQLMMEHSGLGGLITEFFI. The Cytoplasmic segment spans residues 335 to 351; sequence NVANKDTFPVMTFFSSA. The helical transmembrane segment at 352–372 threads the bilayer; it reads LINFAVPSGGGHWVIQGPFVI. Residues 373 to 394 lie on the Periplasmic side of the membrane; the sequence is PAAQALGADLGKSVMAIAYGEQ. The helical transmembrane segment at 395 to 415 threads the bilayer; it reads WMNMAQPFWALPALAIAGLGV. At 416-419 the chain is on the cytoplasmic side; the sequence is RDIM. Residues 420–440 traverse the membrane as a helical segment; sequence GYCITALLFSGVIFVIGLTLF.

It is found in the cell inner membrane. Its function is as follows. May be responsible for the uptake of short-chain fatty acids. The sequence is that of Putative short-chain fatty acid transporter (atoE) from Escherichia coli (strain K12).